The primary structure comprises 467 residues: Glutamate--tRNA ligase (467 aa).

The short motif at 9–19 is the 'HIGH' region element; the sequence is PSPTGNLHIGS. Positions 237–241 match the 'KMSKS' region motif; it reads KISKR. Lysine 240 serves as a coordination point for ATP.

This sequence belongs to the class-I aminoacyl-tRNA synthetase family. Glutamate--tRNA ligase type 1 subfamily. In terms of assembly, monomer.

The protein localises to the cytoplasm. The catalysed reaction is tRNA(Glu) + L-glutamate + ATP = L-glutamyl-tRNA(Glu) + AMP + diphosphate. Its function is as follows. Catalyzes the attachment of glutamate to tRNA(Glu) in a two-step reaction: glutamate is first activated by ATP to form Glu-AMP and then transferred to the acceptor end of tRNA(Glu). This chain is Glutamate--tRNA ligase, found in Buchnera aphidicola subsp. Acyrthosiphon pisum (strain APS) (Acyrthosiphon pisum symbiotic bacterium).